Here is a 392-residue protein sequence, read N- to C-terminus: MEPPGRRECPFPSWRFPGLLLAAMVLLLYSFSDACEEPPTFEAMELIGKPKPYYEIGERVDYKCKKGYFYIPPLATHTICDRNHTWLPVSDDACYRETCPYIRDPLNGQAVPANGTYEFGYQMHFICNEGYYLIGEEILYCELKGSVAIWSGKPPICEKVLCTPPPKIKNGKHTFSEVEVFEYLDAVTYSCDPAPGPDPFSLIGESTIYCGDNSVWSRAAPECKVVKCRFPVVENGKQISGFGKKFYYKATVMFECDKGFYLDGSDTIVCDSNSTWDPPVPKCLKVLPPSSTKPPALSHSVSTSSTTKSPASSASGPRPTYKPPVSNYPGYPKPEEGILDSLDVWVIAVIVIAIVVGVAVICVVPYRYLQRRKKKGTYLTDETHREVKFTSL.

The N-terminal stretch at 1 to 34 (MEPPGRRECPFPSWRFPGLLLAAMVLLLYSFSDA) is a signal peptide. Cystine bridges form between Cys-35-Cys-80, Cys-64-Cys-94, Cys-99-Cys-141, Cys-127-Cys-157, Cys-162-Cys-210, Cys-191-Cys-223, Cys-228-Cys-270, and Cys-256-Cys-283. Sushi domains follow at residues 35–96 (CEEP…ACYR), 97–159 (ETCP…ICEK), 160–225 (VLCT…ECKV), and 226–285 (VKCR…KCLK). The Extracellular segment spans residues 35-343 (CEEPPTFEAM…PEEGILDSLD (309 aa)). N-linked (GlcNAc...) asparagine glycans are attached at residues Asn-83 and Asn-114. Thr-163 carries an O-linked (GalNAc...) threonine glycan. Asn-273 is a glycosylation site (N-linked (GlcNAc...) asparagine). Ser-290 and Ser-291 each carry an O-linked (GalNAc...) serine glycan. Residues 291 to 315 (STKPPALSHSVSTSSTTKSPASSAS) are compositionally biased toward low complexity. Positions 291 to 328 (STKPPALSHSVSTSSTTKSPASSASGPRPTYKPPVSNY) are disordered. Thr-292 is a glycosylation site (O-linked (GalNAc...) threonine). 3 O-linked (GalNAc...) serine glycosylation sites follow: Ser-298, Ser-300, and Ser-302. O-linked (GalNAc...) threonine glycosylation occurs at Thr-303. Residues Ser-304 and Ser-305 are each glycosylated (O-linked (GalNAc...) serine). O-linked (GalNAc...) threonine glycosylation is found at Thr-306 and Thr-307. O-linked (GalNAc...) serine glycosylation is found at Ser-309, Ser-312, Ser-313, and Ser-315. Thr-320 carries an O-linked (GalNAc...) threonine glycan. Tyr-321 bears the Phosphotyrosine mark. Residue Ser-326 is glycosylated (O-linked (GalNAc...) serine). Asp-340, Ile-354, Val-355, Leu-369, Gln-370, and His-384 each carry phosphotyrosine. A helical transmembrane segment spans residues 344-366 (VWVIAVIVIAIVVGVAVICVVPY). The Cytoplasmic portion of the chain corresponds to 367-392 (RYLQRRKKKGTYLTDETHREVKFTSL).

In terms of assembly, interacts with C3b. Interacts with C4b. Interacts with moesin/MSN. (Microbial infection) Interacts (via N-terminus) with measles virus H protein; this interaction allows attachment and viral entry of vaccine and laboratory-adapted strains. As to quaternary structure, (Microbial infection) Interacts with human herpesvirus 6 GH protein. In terms of assembly, (Microbial infection) Interacts with human adenovirus B/D fiber protein. (Microbial infection) Binds to Streptococcus pyogenes M protein and to type IV pili from Neisseria. Post-translationally, N-glycosylated on Asn-83; Asn-114 and Asn-273 in most tissues, but probably less N-glycosylated in testis. N-glycosylation on Asn-114 and Asn-273 is required for cytoprotective function. N-glycosylation on Asn-114 is required for Measles virus binding. N-glycosylation on Asn-273 is required for Neisseria binding. N-glycosylation is not required for human adenovirus binding. In terms of processing, extensively O-glycosylated in the Ser/Thr-rich domain. O-glycosylation is required for Neisseria binding but not for Measles virus or human adenovirus binding. In epithelial cells, isoforms B/D/F/H/J/L/3 are phosphorylated by YES1 in response to infection by Neisseria gonorrhoeae; which promotes infectivity. In T-cells, these isoforms may be phosphorylated by LCK. As to expression, expressed by all cells except erythrocytes.

The protein resides in the cytoplasmic vesicle. The protein localises to the secretory vesicle. Its subcellular location is the acrosome inner membrane. Its function is as follows. Acts as a cofactor for complement factor I, a serine protease which protects autologous cells against complement-mediated injury by cleaving C3b and C4b deposited on host tissue. May be involved in the fusion of the spermatozoa with the oocyte during fertilization. Also acts as a costimulatory factor for T-cells which induces the differentiation of CD4+ into T-regulatory 1 cells. T-regulatory 1 cells suppress immune responses by secreting interleukin-10, and therefore are thought to prevent autoimmunity. Functionally, (Microbial infection) A number of viral and bacterial pathogens seem to bind MCP in order to exploit its immune regulation property and directly induce an immunosuppressive phenotype in T-cells. In terms of biological role, (Microbial infection) Acts as a receptor for Adenovirus subgroup B2 and Ad3. (Microbial infection) Acts as a receptor for cultured Measles virus. Its function is as follows. (Microbial infection) Acts as a receptor for Herpesvirus 6/HHV-6. Functionally, (Microbial infection) May act as a receptor for pathogenic bacteria Neisseria and Streptococcus pyogenes. The sequence is that of Membrane cofactor protein (CD46) from Homo sapiens (Human).